The primary structure comprises 239 residues: Ribonuclease 3 (239 aa).

The RNase III domain maps to 11–133; sequence HTAIQKKLGY…MFAAVSFDAD (123 aa). E46 lines the Mg(2+) pocket. D50 is an active-site residue. 2 residues coordinate Mg(2+): D119 and E122. E122 is a catalytic residue. Residues 160 to 230 form the DRBM domain; that stretch reads DGKTALQEAL…AKEALKWLEE (71 aa).

It belongs to the ribonuclease III family. In terms of assembly, homodimer. Requires Mg(2+) as cofactor.

The protein localises to the cytoplasm. The enzyme catalyses Endonucleolytic cleavage to 5'-phosphomonoester.. In terms of biological role, digests double-stranded RNA. Involved in the processing of primary rRNA transcript to yield the immediate precursors to the large and small rRNAs (23S and 16S). Processes some mRNAs, and tRNAs when they are encoded in the rRNA operon. Processes pre-crRNA and tracrRNA of type II CRISPR loci if present in the organism. The chain is Ribonuclease 3 from Neisseria gonorrhoeae (strain ATCC 700825 / FA 1090).